A 256-amino-acid polypeptide reads, in one-letter code: 3-dehydroquinate dehydratase (256 aa).

Residues 46–48 and arginine 82 contribute to the 3-dehydroquinate site; that span reads EWR. Histidine 144 acts as the Proton donor/acceptor in catalysis. Lysine 171 acts as the Schiff-base intermediate with substrate in catalysis. Arginine 213, serine 232, and glutamine 236 together coordinate 3-dehydroquinate.

It belongs to the type-I 3-dehydroquinase family. Homodimer.

The catalysed reaction is 3-dehydroquinate = 3-dehydroshikimate + H2O. It functions in the pathway metabolic intermediate biosynthesis; chorismate biosynthesis; chorismate from D-erythrose 4-phosphate and phosphoenolpyruvate: step 3/7. Its function is as follows. Involved in the third step of the chorismate pathway, which leads to the biosynthesis of aromatic amino acids. Catalyzes the cis-dehydration of 3-dehydroquinate (DHQ) and introduces the first double bond of the aromatic ring to yield 3-dehydroshikimate. The chain is 3-dehydroquinate dehydratase from Shouchella clausii (strain KSM-K16) (Alkalihalobacillus clausii).